A 618-amino-acid polypeptide reads, in one-letter code: UvrABC system protein C (618 aa).

Positions 15–93 (RTPGVYLMKD…IKEHHPRYNI (79 aa)) constitute a GIY-YIG domain. A UVR domain is found at 203–238 (NNLLRELRERMKMAAEQMNYEEAAFLRDRIRAIEET).

It belongs to the UvrC family. Interacts with UvrB in an incision complex.

The protein localises to the cytoplasm. The UvrABC repair system catalyzes the recognition and processing of DNA lesions. UvrC both incises the 5' and 3' sides of the lesion. The N-terminal half is responsible for the 3' incision and the C-terminal half is responsible for the 5' incision. The chain is UvrABC system protein C from Syntrophus aciditrophicus (strain SB).